The sequence spans 204 residues: Probable calcium-binding protein CML46 (204 aa).

EF-hand domains lie at 72 to 106 (LEFQTSIKHEEYRDDDDDGLCREDVGMVMKSLGLS), 132 to 167 (PSLEEVKQAFDVFDENRDGFIDPIDLQRVLTILGLK), and 170 to 204 (SNLENCRRMIRSFDGSKDGRIDFYGFVKFMENNFC). Ca(2+) contacts are provided by Asp-145, Asn-147, Asp-149, and Asp-156.

Functionally, potential calcium sensor. The sequence is that of Probable calcium-binding protein CML46 from Arabidopsis thaliana (Mouse-ear cress).